The sequence spans 63 residues: Beta-defensin 3 (63 aa).

The signal sequence occupies residues 1–20; sequence MRIHYLLFSFLLVLLSPLSA. A propeptide spanning residues 21–22 is cleaved from the precursor; sequence FS. 3 cysteine pairs are disulfide-bonded: Cys-31-Cys-59, Cys-38-Cys-52, and Cys-42-Cys-60.

It belongs to the beta-defensin family.

The protein localises to the secreted. Its function is as follows. Has bactericidal activity. The polypeptide is Beta-defensin 3 (Defb3) (Rattus norvegicus (Rat)).